Here is an 85-residue protein sequence, read N- to C-terminus: U4-theraphotoxin-Hhn1a (85 aa).

The N-terminal stretch at 1-22 is a signal peptide; the sequence is MKVTLIAILTCAAVLVLHTTAA. A propeptide spanning residues 23-48 is cleaved from the precursor; that stretch reads EELEAESQPMEVGMPDTELAAVDEER. 3 cysteine pairs are disulfide-bonded: C52-C66, C56-C77, and C71-C82.

Belongs to the neurotoxin 12 (Hwtx-2) family. 02 (Hwtx-2) subfamily. As to quaternary structure, monomer. As to expression, expressed by the venom gland.

It is found in the secreted. In terms of biological role, neurotoxin active on both insects and mammals. The polypeptide is U4-theraphotoxin-Hhn1a (Cyriopagopus hainanus (Chinese bird spider)).